We begin with the raw amino-acid sequence, 239 residues long: Serine protease SplD (239 aa).

The first 36 residues, 1–36, serve as a signal peptide directing secretion; that stretch reads MNKNIIIKSIAALTILTSITGVGTTVVDGIQQTAKA. Catalysis depends on charge relay system residues H75, D114, and S192.

The protein belongs to the peptidase S1B family.

The protein localises to the secreted. The chain is Serine protease SplD (splD) from Staphylococcus aureus (strain COL).